The sequence spans 199 residues: Interleukin-11 (199 aa).

A signal peptide spans 1 to 21; sequence MNCVCRLVLVVLSLWPDTAVA. Positions 182-190 are important for interaction with IL11RA and for the stimulation of cell proliferation; sequence HLTLDWAVR.

It belongs to the IL-6 superfamily. Interacts with IL11RA to associate with IL6ST, giving rise to a multimeric signaling complex.

It is found in the secreted. Cytokine that stimulates the proliferation of hematopoietic stem cells and megakaryocyte progenitor cells and induces megakaryocyte maturation resulting in increased platelet production. Also promotes the proliferation of hepatocytes in response to liver damage. Binding to its receptor formed by IL6ST and IL11RA activates a signaling cascade that promotes cell proliferation. Signaling leads to the activation of intracellular protein kinases and the phosphorylation of STAT3. The interaction with the membrane-bound IL11RA and IL6ST stimulates 'classic signaling', whereas the binding of IL11 and soluble IL11RA to IL6ST stimulates 'trans-signaling'. The chain is Interleukin-11 from Homo sapiens (Human).